Here is a 292-residue protein sequence, read N- to C-terminus: uncharacterized protein (292 aa).

Residue Lys-8 forms a Glycyl lysine isopeptide (Lys-Gly) (interchain with G-Cter in SUMO2) linkage. The segment at 47 to 67 (TKRKMLPSSSSRMRSDGFDEE) is disordered. Lys-76 is covalently cross-linked (Glycyl lysine isopeptide (Lys-Gly) (interchain with G-Cter in SUMO2)). Asn-94 carries the post-translational modification Phosphothreonine. Residues Lys-96 and Phe-97 each carry the phosphoserine modification. Positions 122–292 (ETDSDQQDIT…ERSAESSEDD (171 aa)) are disordered. Thr-123 is modified (phosphothreonine). Phosphoserine is present on residues Ser-125 and Asp-126. A compositionally biased stretch (polar residues) spans 128–140 (QDITNGKKTSPQV). The segment covering 147 to 173 (SRKHKKSKKSHKKKQKKRSHKKQKKSK) has biased composition (basic residues). Over residues 180–194 (TADSSSEFSEETGAS) the composition is skewed to polar residues. 2 stretches are compositionally biased toward basic residues: residues 197-215 (RKGKQPHKRKKKSRKKSLK) and 247-259 (KKTKRKKREKKAH). Positions 280–292 (ATDERSAESSEDD) are enriched in basic and acidic residues.

This is an uncharacterized protein from Homo sapiens (Human).